Consider the following 535-residue polypeptide: Glutamate--cysteine ligase (535 aa).

This sequence belongs to the glutamate--cysteine ligase type 1 family. Type 1 subfamily.

It carries out the reaction L-cysteine + L-glutamate + ATP = gamma-L-glutamyl-L-cysteine + ADP + phosphate + H(+). It functions in the pathway sulfur metabolism; glutathione biosynthesis; glutathione from L-cysteine and L-glutamate: step 1/2. This is Glutamate--cysteine ligase from Pseudomonas syringae pv. syringae (strain B728a).